The sequence spans 281 residues: CCAAT/enhancer-binding protein epsilon (281 aa).

Positions 1 to 30 are disordered; it reads MSHGTYYECEPRAGQQPLEFSGARAGPGEL. A Glycyl lysine isopeptide (Lys-Gly) (interchain with G-Cter in SUMO2) cross-link involves residue Lys121. Ser181 bears the Phosphoserine mark. The 64-residue stretch at 204-267 folds into the bZIP domain; sequence SLEYRLRRER…DTLRNLFRQI (64 aa). The interval 208-228 is basic motif; it reads RLRRERNNIAVRKSRDKAKRR. Residues 230-237 form a leucine-zipper region; sequence LETQQKVL.

It belongs to the bZIP family. C/EBP subfamily. Binds DNA as a homodimer and as a heterodimer. Can form stable heterodimers with CEBPA, CEBPB and CEBPD. Interacts with GATA1 and SPI1. Interacts with SMARCD2. Post-translationally, phosphorylated.

It is found in the nucleus. Transcriptional activator. C/EBP are DNA-binding proteins that recognize two different motifs: the CCAAT homology common to many promoters and the enhanced core homology common to many enhancers. Required for the promyelocyte-myelocyte transition in myeloid differentiation. The chain is CCAAT/enhancer-binding protein epsilon (CEBPE) from Ovis aries (Sheep).